A 429-amino-acid polypeptide reads, in one-letter code: Adenylosuccinate synthetase (429 aa).

GTP is bound by residues 12 to 18 and 40 to 42; these read GDEGKGK and GHT. The active-site Proton acceptor is Asp13. Positions 13 and 40 each coordinate Mg(2+). Residues 13-16, 38-41, Thr129, Arg143, Gln223, Thr238, and Arg302 each bind IMP; these read DEGK and NAGH. His41 functions as the Proton donor in the catalytic mechanism. Residue 298-304 coordinates substrate; that stretch reads VVTGRKR. GTP is bound by residues Arg304, 330–332, and 412–414; these read KLD and STS.

The protein belongs to the adenylosuccinate synthetase family. As to quaternary structure, homodimer. Mg(2+) is required as a cofactor.

The protein resides in the cytoplasm. It catalyses the reaction IMP + L-aspartate + GTP = N(6)-(1,2-dicarboxyethyl)-AMP + GDP + phosphate + 2 H(+). It functions in the pathway purine metabolism; AMP biosynthesis via de novo pathway; AMP from IMP: step 1/2. Its function is as follows. Plays an important role in the de novo pathway of purine nucleotide biosynthesis. Catalyzes the first committed step in the biosynthesis of AMP from IMP. In Bartonella bacilliformis (strain ATCC 35685 / KC583 / Herrer 020/F12,63), this protein is Adenylosuccinate synthetase.